The following is a 504-amino-acid chain: Maturase K (504 aa).

The protein belongs to the intron maturase 2 family. MatK subfamily.

The protein localises to the plastid. It localises to the chloroplast. Functionally, usually encoded in the trnK tRNA gene intron. Probably assists in splicing its own and other chloroplast group II introns. This is Maturase K from Amaranthus caudatus (Love-lies-bleeding).